Here is an 81-residue protein sequence, read N- to C-terminus: MSGSTGERPFGDIVTSIRYWIIHSITIPMLFIAGWLFVSTGLAYDVFGTPRPDEYYTQERQELPIINDRFEAKNQIEQFNQ.

Residues 21-35 (IIHSITIPMLFIAGW) form a helical membrane-spanning segment. Heme is bound at residue His-23.

This sequence belongs to the PsbE/PsbF family. In terms of assembly, heterodimer of an alpha subunit and a beta subunit. PSII is composed of 1 copy each of membrane proteins PsbA, PsbB, PsbC, PsbD, PsbE, PsbF, PsbH, PsbI, PsbJ, PsbK, PsbL, PsbM, PsbT, PsbX, PsbY, PsbZ, Psb30/Ycf12, peripheral proteins PsbO, CyanoQ (PsbQ), PsbU, PsbV and a large number of cofactors. It forms dimeric complexes. Heme b serves as cofactor.

The protein localises to the cellular thylakoid membrane. Its function is as follows. This b-type cytochrome is tightly associated with the reaction center of photosystem II (PSII). PSII is a light-driven water:plastoquinone oxidoreductase that uses light energy to abstract electrons from H(2)O, generating O(2) and a proton gradient subsequently used for ATP formation. It consists of a core antenna complex that captures photons, and an electron transfer chain that converts photonic excitation into a charge separation. This chain is Cytochrome b559 subunit alpha, found in Microcystis aeruginosa (strain NIES-843 / IAM M-2473).